The following is a 188-amino-acid chain: Kappa-casein (188 aa).

The first 21 residues, 1-21 (MMKSSFLIVPILALTLPFLGA), serve as a signal peptide directing secretion. O-linked (GalNAc...) threonine glycans are attached at residues Thr143 and Thr148. Thr163 is subject to Phosphothreonine. A Phosphoserine; alternate modification is found at Ser167. O-linked (GalNAc...) serine; alternate glycosylation occurs at Ser167. O-linked (GalNAc...) threonine glycosylation occurs at Thr184. Ser185 is subject to Phosphoserine.

This sequence belongs to the kappa-casein family. Mammary gland specific. Secreted in milk.

It is found in the secreted. Its function is as follows. Kappa-casein stabilizes micelle formation, preventing casein precipitation in milk. This Sus scrofa (Pig) protein is Kappa-casein (CSN3).